A 341-amino-acid chain; its full sequence is Annexin A1 isoform p35 (341 aa).

Annexin repeat units lie at residues 37–108 (FDPS…ALLK), 109–180 (TPAQ…SLAK), 192–263 (ELAE…ALVK), and 267–338 (SKPA…ALCG).

This sequence belongs to the annexin family. In contrast to mammalian homologs, does not contain a tyrosine phosphorylation site in the N-terminal part.

The protein localises to the nucleus. Its subcellular location is the cytoplasm. It is found in the cell projection. The protein resides in the cilium. It localises to the basolateral cell membrane. Functionally, calcium/phospholipid-binding protein which promotes membrane fusion and is involved in exocytosis. This protein regulates phospholipase A2 activity. It seems to bind from two to four calcium ions with high affinity. The protein is Annexin A1 isoform p35 (CP35) of Columba livia (Rock dove).